The following is a 71-amino-acid chain: Sec-independent protein translocase protein TatA (71 aa).

The helical transmembrane segment at Met1–Gly21 threads the bilayer. Positions Leu43–His71 are disordered. The span at Gln52–Gln65 shows a compositional bias: polar residues.

This sequence belongs to the TatA/E family. In terms of assembly, the Tat system comprises two distinct complexes: a TatABC complex, containing multiple copies of TatA, TatB and TatC subunits, and a separate TatA complex, containing only TatA subunits. Substrates initially bind to the TatABC complex, which probably triggers association of the separate TatA complex to form the active translocon.

The protein resides in the cell inner membrane. Its function is as follows. Part of the twin-arginine translocation (Tat) system that transports large folded proteins containing a characteristic twin-arginine motif in their signal peptide across membranes. TatA could form the protein-conducting channel of the Tat system. In Xylella fastidiosa (strain 9a5c), this protein is Sec-independent protein translocase protein TatA.